Consider the following 134-residue polypeptide: Small ribosomal subunit protein uS11 (134 aa).

The disordered stretch occupies residues valine 115–leucine 134. The span at arginine 125 to leucine 134 shows a compositional bias: basic residues.

It belongs to the universal ribosomal protein uS11 family.

This Syntrichia ruralis (Great hairy screw-moss) protein is Small ribosomal subunit protein uS11 (RPS14).